A 90-amino-acid polypeptide reads, in one-letter code: RNA-binding protein Hfq (90 aa).

Positions 9–68 (DPFLNALRRERVPVSIYLVNGIKLQGQVESFDQFVILLKNTVSQMVYKHAISTVVPARPF) constitute a Sm domain.

This sequence belongs to the Hfq family. In terms of assembly, homohexamer.

RNA chaperone that binds small regulatory RNA (sRNAs) and mRNAs to facilitate mRNA translational regulation in response to envelope stress, environmental stress and changes in metabolite concentrations. Also binds with high specificity to tRNAs. The protein is RNA-binding protein Hfq of Shewanella oneidensis (strain ATCC 700550 / JCM 31522 / CIP 106686 / LMG 19005 / NCIMB 14063 / MR-1).